Here is a 142-residue protein sequence, read N- to C-terminus: Large ribosomal subunit protein uL22c (142 aa).

Belongs to the universal ribosomal protein uL22 family. In terms of assembly, part of the 50S ribosomal subunit.

The protein localises to the plastid. It is found in the chloroplast. This protein binds specifically to 23S rRNA. Its function is as follows. The globular domain of the protein is located near the polypeptide exit tunnel on the outside of the subunit, while an extended beta-hairpin is found that lines the wall of the exit tunnel in the center of the 70S ribosome. This Pinus thunbergii (Japanese black pine) protein is Large ribosomal subunit protein uL22c (rpl22).